The chain runs to 1238 residues: Chitin synthase 4 (1238 aa).

2 disordered regions span residues 1-93 (MAEP…PERN) and 132-190 (TVSS…RRQK). Residues 14–34 (TRDKSHSPYRESPSRRLRDVE) are compositionally biased toward basic and acidic residues. Asn-50 carries N-linked (GlcNAc...) asparagine glycosylation. Composition is skewed to polar residues over residues 71–80 (SNPNPMSQSD) and 133–142 (VSSGSTQQDT). Positions 175–190 (RKDTRNLTEEEKRRQK) are enriched in basic and acidic residues. N-linked (GlcNAc...) asparagine glycosylation occurs at Asn-180. 2 helical membrane-spanning segments follow: residues 200-220 (IWNIYCAVVTFWAPDCLLQCF) and 235-255 (VGLISIILLIAAFVGFLTFGF). Asn-365, Asn-404, and Asn-426 each carry an N-linked (GlcNAc...) asparagine glycan. A helical transmembrane segment spans residues 487–507 (VVLYVSLVFILAIVAAKFFLA). Disordered stretches follow at residues 548–570 (PKITDPASTVTGSDGRTSKRGSM) and 582–606 (YAVDRRSSRPPPTTMTSQSSNAKLL). The span at 553–562 (PASTVTGSDG) shows a compositional bias: polar residues. N-linked (GlcNAc...) asparagine glycosylation is found at Asn-617, Asn-903, and Asn-1030. The next 3 membrane-spanning stretches (helical) occupy residues 1062 to 1082 (IGTLVLPAAISFTFYLIILSI), 1087 to 1107 (VPVIPLVLLALILGLPAILIV), and 1115 to 1135 (YILWMGIYLLSLPIWNFVLPA).

Belongs to the chitin synthase family. Class IV subfamily. Post-translationally, maximal activity requires trypsin activation, suggesting a zymogenic nature.

It localises to the cell membrane. It catalyses the reaction [(1-&gt;4)-N-acetyl-beta-D-glucosaminyl](n) + UDP-N-acetyl-alpha-D-glucosamine = [(1-&gt;4)-N-acetyl-beta-D-glucosaminyl](n+1) + UDP + H(+). Its activity is regulated as follows. Activity is stimulated by Mg(2+), and is more inhibited by polyoxin D than by nikkomycin. In terms of biological role, polymerizes chitin, a structural polymer of the cell wall and septum, by transferring the sugar moiety of UDP-GlcNAc to the non-reducing end of the growing chitin polymer. CHS4 synthesizes a large amount of chitin and appears to play a role in the process of cell separation. CHS4 is particularly well suited for functioning at the higher temperatures associated with its poorly characterized saprophic environment and with human infection. The polypeptide is Chitin synthase 4 (Exophiala dermatitidis (Black yeast-like fungus)).